The following is a 102-amino-acid chain: Putative toxin YafQ (102 aa).

It belongs to the RelE toxin family. YafQ subfamily.

Toxic component of a type II toxin-antitoxin (TA) system. Its cognate antitoxin is RelB. The protein is Putative toxin YafQ of Haemophilus influenzae (strain ATCC 51907 / DSM 11121 / KW20 / Rd).